The following is a 352-amino-acid chain: Gamma-aminobutyric acid-binding protein (352 aa).

Residues 1 to 28 (MFKSLHQYAHVFSRLSLFGLAFAAAAQA) form the signal peptide.

Belongs to the bacterial solute-binding protein 1 family.

The protein localises to the periplasm. Its function is as follows. Binds specifically gamma-aminobutyric acid (GABA) with nanomolar affinity. Does not bind structurally related compounds such as 4-aminovaleric acid, spermidine, histamine and butyric acid. This is Gamma-aminobutyric acid-binding protein from Pseudomonas aeruginosa (strain ATCC 15692 / DSM 22644 / CIP 104116 / JCM 14847 / LMG 12228 / 1C / PRS 101 / PAO1).